The chain runs to 316 residues: Chorismate mutase 3, chloroplastic (316 aa).

The transit peptide at methionine 1–arginine 47 directs the protein to the chloroplast. An L-phenylalanine-binding site is contributed by arginine 62. A Chorismate mutase domain is found at arginine 62–aspartate 316. L-tyrosine is bound by residues arginine 133 and asparagine 194–serine 197. Asparagine 194–serine 197 provides a ligand contact to L-phenylalanine.

As to quaternary structure, homodimer. In terms of tissue distribution, expressed in roots, stems, cauline leaves, flowers and siliques, and at lower levels in rosette leaves.

The protein localises to the plastid. It is found in the chloroplast. The enzyme catalyses chorismate = prephenate. It participates in metabolic intermediate biosynthesis; prephenate biosynthesis; prephenate from chorismate: step 1/1. Its activity is regulated as follows. Allosterically inhibited by tyrosine and phenylalanine. According to another report, seems not to be repressed by tyrosine and phenylalanine. Activated by tryptophan, cysteine and histidine. May play a role in chloroplast biogenesis. The chain is Chorismate mutase 3, chloroplastic from Arabidopsis thaliana (Mouse-ear cress).